The chain runs to 237 residues: Phosphatidylserine decarboxylase proenzyme (237 aa).

Serine 206 serves as the catalytic Schiff-base intermediate with substrate; via pyruvic acid. At serine 206 the chain carries Pyruvic acid (Ser); by autocatalysis.

This sequence belongs to the phosphatidylserine decarboxylase family. PSD-A subfamily. As to quaternary structure, heterodimer of a large membrane-associated beta subunit and a small pyruvoyl-containing alpha subunit. Pyruvate is required as a cofactor. Is synthesized initially as an inactive proenzyme. Formation of the active enzyme involves a self-maturation process in which the active site pyruvoyl group is generated from an internal serine residue via an autocatalytic post-translational modification. Two non-identical subunits are generated from the proenzyme in this reaction, and the pyruvate is formed at the N-terminus of the alpha chain, which is derived from the carboxyl end of the proenzyme. The post-translation cleavage follows an unusual pathway, termed non-hydrolytic serinolysis, in which the side chain hydroxyl group of the serine supplies its oxygen atom to form the C-terminus of the beta chain, while the remainder of the serine residue undergoes an oxidative deamination to produce ammonia and the pyruvoyl prosthetic group on the alpha chain.

The protein resides in the cell membrane. The enzyme catalyses a 1,2-diacyl-sn-glycero-3-phospho-L-serine + H(+) = a 1,2-diacyl-sn-glycero-3-phosphoethanolamine + CO2. The protein operates within phospholipid metabolism; phosphatidylethanolamine biosynthesis; phosphatidylethanolamine from CDP-diacylglycerol: step 2/2. Functionally, catalyzes the formation of phosphatidylethanolamine (PtdEtn) from phosphatidylserine (PtdSer). The polypeptide is Phosphatidylserine decarboxylase proenzyme (Mycobacteroides abscessus (strain ATCC 19977 / DSM 44196 / CCUG 20993 / CIP 104536 / JCM 13569 / NCTC 13031 / TMC 1543 / L948) (Mycobacterium abscessus)).